We begin with the raw amino-acid sequence, 103 residues long: UPF0145 protein pXO2-45/BXB0052/GBAA_pXO2_0052 (103 aa).

It belongs to the UPF0145 family.

This chain is UPF0145 protein pXO2-45/BXB0052/GBAA_pXO2_0052, found in Bacillus anthracis.